Here is a 261-residue protein sequence, read N- to C-terminus: Putative outer membrane protein CT_371 (261 aa).

The N-terminal stretch at 1–18 (MRLCFILFLLLSPLISEA) is a signal peptide.

The protein localises to the cell outer membrane. The protein is Putative outer membrane protein CT_371 of Chlamydia trachomatis serovar D (strain ATCC VR-885 / DSM 19411 / UW-3/Cx).